We begin with the raw amino-acid sequence, 1081 residues long: Teashirt homolog 3 (1081 aa).

Disordered stretches follow at residues 141 to 161 and 238 to 257; these read PSSE…SSCG and HYRD…WSKP. Positions 148–161 are enriched in low complexity; the sequence is GSSSSSSSSSSSCG. 2 consecutive C2H2-type zinc fingers follow at residues 214-238 and 275-299; these read FRCK…ETGH and LKCM…KTKH. Residues 238–247 are compositionally biased toward basic and acidic residues; that stretch reads HYRDDNHETD. Residues 325–364 are disordered; the sequence is SLELELPSSPDSTGGTPKATISDTNDALQKNSNPYITPNN. Residues 335 to 364 show a composition bias toward polar residues; it reads DSTGGTPKATISDTNDALQKNSNPYITPNN. A C2H2-type 3; atypical zinc finger spans residues 386 to 404; it reads LKCMECGSSHDTLQELTAH. Residues 473-491 are compositionally biased toward basic and acidic residues; that stretch reads EVDKEKAVTDEKPKQKDKP. Disordered regions lie at residues 473–502, 579–604, 626–687, and 855–897; these read EVDK…DISS, NSEI…PMPK, EKMK…LAEP, and TESH…RQSN. The span at 581–603 shows a compositional bias: polar residues; it reads EIVSPTKNQTLVSPPSSQTSPMP. Residues 606 to 630 are a coiled coil; the sequence is NFHAMEELVKKVTEKVAKVEEKMKE. Residue Ser682 is modified to Phosphoserine. Positions 856–869 are enriched in low complexity; sequence ESHTSKSSTPSSIS. Positions 891–961 form a DNA-binding region, homeobox; atypical; it reads RKGRQSNWNP…NVKYQLRRTG (71 aa). 2 C2H2-type zinc fingers span residues 976-998 and 1041-1064; these read FFCN…LESH and YQCK…SKTH.

It belongs to the teashirt C2H2-type zinc-finger protein family. In terms of assembly, interacts (via homeobox domain) with APBB1 (via PID domain 1). Interacts (via N-terminus) with HDAC1 and HDAC2; the interaction is direct. Found in a trimeric complex with APBB1 and HDAC1; the interaction between HDAC1 and APBB1 is mediated by TSHZ3. As to expression, expressed in brain; strongly reduced in post-mortem elderly subjects with Alzheimer disease. Expressed in the fetal neocortex.

The protein resides in the nucleus. The protein localises to the cell projection. Its subcellular location is the growth cone. Functionally, transcriptional regulator involved in developmental processes. Functions in association with APBB1, SET and HDAC factors as a transcriptional repressor, that inhibits the expression of CASP4. TSHZ3-mediated transcription repression involves the recruitment of histone deacetylases HDAC1 and HDAC2. Associates with chromatin in a region surrounding the CASP4 transcriptional start site(s). Regulates the development of neurons involved in both respiratory rhythm and airflow control. Promotes maintenance of nucleus ambiguus (nA) motoneurons, which govern upper airway function, and establishes a respiratory rhythm generator (RRG) activity compatible with survival at birth. Involved in the differentiation of the proximal uretic smooth muscle cells during developmental processes. Involved in the up-regulation of myocardin, that directs the expression of smooth muscle cells in the proximal ureter. Involved in the modulation of glutamatergic synaptic transmission and long-term synaptic potentiation. This chain is Teashirt homolog 3 (TSHZ3), found in Homo sapiens (Human).